Reading from the N-terminus, the 378-residue chain is Cyclic GMP-AMP synthase-like receptor 1 (378 aa).

Mg(2+)-binding residues include E71, D73, and D187. 71–73 (EFD) is a binding site for ATP. Residues D187 and 233-240 (TSSFYEAE) contribute to the GTP site. Residues 237–240 (YEAE), K258, and 271–275 (SYHIK) each bind ATP.

Belongs to the mab-21 family. Mg(2+) serves as cofactor. The cofactor is Mn(2+).

It catalyses the reaction GTP + ATP = 3',2'-cGAMP + 2 diphosphate. The enzyme catalyses GTP + ATP = pppA(2'-5')pG + diphosphate. The catalysed reaction is pppA(2'-5')pG = 3',2'-cGAMP + diphosphate. With respect to regulation, the enzyme activity is specifically activated by double-stranded RNA (dsRNA). Recognizes long dsRNA (&gt;30 bp) with no preference for 5' RNA phosphorylation. Functionally, nucleotidyltransferase that catalyzes the formation of cyclic GMP-AMP (3',2'-cGAMP) from ATP and GTP and plays a key role in antiviral innate immunity. Synthesizes 3',2'-cGAMP in a two-step reaction through production of the linear intermediate pppA(2'-5')pG. Acts as a key sensor of double-stranded RNA (dsRNA), the presence of dsRNA in the cytoplasm being a danger signal that triggers the immune responses. Directly binds dsRNA, activating the nucleotidyltransferase activity, leading to synthesis of 3',2'-cGAMP, a second messenger that binds to and activates Sting, thereby triggering the antiviral immune response via activation of the NF-kappa-B transcription factor Rel (Relish). 3',2'-cGAMP is protected from poxin cleavage. In Drosophila melanogaster (Fruit fly), this protein is Cyclic GMP-AMP synthase-like receptor 1.